The primary structure comprises 484 residues: Adenylosuccinate synthetase, chloroplastic (484 aa).

A chloroplast-targeting transit peptide spans 1-44 (MSLSTLSHPAAAAAGSGKSLFPAGPAAQSVHFPKARLPVPAAVS). GTP is bound by residues 71 to 77 (GDEGKGK) and 99 to 101 (GHT). The active-site Proton acceptor is the aspartate 72. Mg(2+)-binding residues include aspartate 72 and glycine 99. IMP-binding positions include 72 to 75 (DEGK), 97 to 100 (NAGH), threonine 189, arginine 203, glutamine 283, threonine 298, and arginine 362. The Proton donor role is filled by histidine 100. 358–364 (TTTGRPR) serves as a coordination point for substrate. GTP-binding positions include arginine 364, 390-392 (KLD), and 473-475 (GVG).

The protein belongs to the adenylosuccinate synthetase family. As to quaternary structure, homodimer. It depends on Mg(2+) as a cofactor.

The protein resides in the plastid. The protein localises to the chloroplast. The catalysed reaction is IMP + L-aspartate + GTP = N(6)-(1,2-dicarboxyethyl)-AMP + GDP + phosphate + 2 H(+). It functions in the pathway purine metabolism; AMP biosynthesis via de novo pathway; AMP from IMP: step 1/2. Plays an important role in the de novo pathway and in the salvage pathway of purine nucleotide biosynthesis. Catalyzes the first committed step in the biosynthesis of AMP from IMP. In Zea mays (Maize), this protein is Adenylosuccinate synthetase, chloroplastic.